The primary structure comprises 164 residues: Phosphopantetheine adenylyltransferase (164 aa).

Ser10 contributes to the substrate binding site. Residues 10–11 (SF) and His18 contribute to the ATP site. Positions 42, 74, and 88 each coordinate substrate. Residues 89-91 (GLR), Glu99, and 124-130 (YAFLSSS) contribute to the ATP site.

Belongs to the bacterial CoaD family. Homohexamer. The cofactor is Mg(2+).

The protein localises to the cytoplasm. The enzyme catalyses (R)-4'-phosphopantetheine + ATP + H(+) = 3'-dephospho-CoA + diphosphate. It functions in the pathway cofactor biosynthesis; coenzyme A biosynthesis; CoA from (R)-pantothenate: step 4/5. In terms of biological role, reversibly transfers an adenylyl group from ATP to 4'-phosphopantetheine, yielding dephospho-CoA (dPCoA) and pyrophosphate. The polypeptide is Phosphopantetheine adenylyltransferase (Geobacillus thermodenitrificans (strain NG80-2)).